We begin with the raw amino-acid sequence, 453 residues long: Cysteine--tRNA ligase (453 aa).

C30 contributes to the Zn(2+) binding site. Positions 32 to 42 match the 'HIGH' region motif; the sequence is PTVYDRAHLGN. 3 residues coordinate Zn(2+): C212, H237, and E241. The short motif at 268 to 272 is the 'KMSKS' region element; that stretch reads KMSKS. ATP is bound at residue K271.

Belongs to the class-I aminoacyl-tRNA synthetase family. In terms of assembly, monomer. Requires Zn(2+) as cofactor.

The protein resides in the cytoplasm. It catalyses the reaction tRNA(Cys) + L-cysteine + ATP = L-cysteinyl-tRNA(Cys) + AMP + diphosphate. This Jannaschia sp. (strain CCS1) protein is Cysteine--tRNA ligase.